A 95-amino-acid polypeptide reads, in one-letter code: Mitochondrial import inner membrane translocase subunit Tim13 (95 aa).

Residues 46–69 (CFKKCIGKPGSTLDNSEQKCIAMC) carry the Twin CX3C motif motif. Disulfide bonds link Cys-46–Cys-69 and Cys-50–Cys-65.

The protein belongs to the small Tim family. As to quaternary structure, heterohexamer; composed of 3 copies of TIMM8 (TIMM8A or TIMM8B) and 3 copies of TIMM13, named soluble 70 kDa complex. Associates with the TIM22 complex, whose core is composed of TIMM22.

Its subcellular location is the mitochondrion inner membrane. Mitochondrial intermembrane chaperone that participates in the import and insertion of some multi-pass transmembrane proteins into the mitochondrial inner membrane. Also required for the transfer of beta-barrel precursors from the TOM complex to the sorting and assembly machinery (SAM complex) of the outer membrane. Acts as a chaperone-like protein that protects the hydrophobic precursors from aggregation and guide them through the mitochondrial intermembrane space. The TIMM8-TIMM13 complex mediates the import of some proteins while the predominant TIMM9-TIMM10 70 kDa complex mediates the import of much more proteins. The sequence is that of Mitochondrial import inner membrane translocase subunit Tim13 (timm13) from Danio rerio (Zebrafish).